Here is a 134-residue protein sequence, read N- to C-terminus: Acyl carrier protein, chloroplastic (134 aa).

The N-terminal 51 residues, 1–51 (MSTTFCSSVSMQATSLAATTRISFQKPGLVSRTNLSFNLRRSIPTRLSVSC), are a transit peptide targeting the chloroplast. Residues 55–130 (PETVEKVSKI…EAAELIEELV (76 aa)) form the Carrier domain. Residue Ser-90 is modified to O-(pantetheine 4'-phosphoryl)serine.

Belongs to the acyl carrier protein (ACP) family. In terms of processing, 4'-phosphopantetheine is transferred from CoA to a specific serine of apo-ACP by acpS. This modification is essential for activity because fatty acids are bound in thioester linkage to the sulfhydryl of the prosthetic group. Seed.

It is found in the plastid. The protein resides in the chloroplast. The protein operates within lipid metabolism; fatty acid biosynthesis. Its function is as follows. Carrier of the growing fatty acid chain in fatty acid biosynthesis. The polypeptide is Acyl carrier protein, chloroplastic (ACL1.A2) (Brassica napus (Rape)).